We begin with the raw amino-acid sequence, 431 residues long: UDP-N-acetylmuramate--L-alanine ligase (431 aa).

108–114 (GAHGKST) provides a ligand contact to ATP.

This sequence belongs to the MurCDEF family.

Its subcellular location is the cytoplasm. It carries out the reaction UDP-N-acetyl-alpha-D-muramate + L-alanine + ATP = UDP-N-acetyl-alpha-D-muramoyl-L-alanine + ADP + phosphate + H(+). The protein operates within cell wall biogenesis; peptidoglycan biosynthesis. Functionally, cell wall formation. This Campylobacter jejuni subsp. jejuni serotype O:6 (strain 81116 / NCTC 11828) protein is UDP-N-acetylmuramate--L-alanine ligase.